The following is a 263-amino-acid chain: MPEGPEIRRAADNLEAAIKGKPLTDVWFAFPQLKTYQSQLIGQHVTHVETRGKALLTHFSNDLTLYSHNQLYGVWRVVDTGEEPQTTRVLRVKLQTADKTILLYSASDIEMLRPEQLTTHPFLQRVGPDVLDPNLTPEVVKERLLSPRFRNRQFAGLLLDQAFLAGLGNYLRVEILWQVGLTGNHKAKDLNAAQLDALAHALLDIPRFSYATRGLVDENKHHGALFRFKVFHRDGEPCERCGSIIEKTTLSSRPFYWCPGCQH.

Pro-2 serves as the catalytic Schiff-base intermediate with DNA. The active-site Proton donor is the Glu-3. Lys-53 functions as the Proton donor; for beta-elimination activity in the catalytic mechanism. DNA-binding residues include Gln-70, Arg-125, and Asn-169. An FPG-type zinc finger spans residues 229–263 (KVFHRDGEPCERCGSIIEKTTLSSRPFYWCPGCQH). Arg-253 serves as the catalytic Proton donor; for delta-elimination activity.

It belongs to the FPG family. Zn(2+) serves as cofactor.

The enzyme catalyses 2'-deoxyribonucleotide-(2'-deoxyribose 5'-phosphate)-2'-deoxyribonucleotide-DNA = a 3'-end 2'-deoxyribonucleotide-(2,3-dehydro-2,3-deoxyribose 5'-phosphate)-DNA + a 5'-end 5'-phospho-2'-deoxyribonucleoside-DNA + H(+). In terms of biological role, involved in base excision repair of DNA damaged by oxidation or by mutagenic agents. Acts as a DNA glycosylase that recognizes and removes damaged bases. Has a preference for oxidized pyrimidines, such as thymine glycol, 5,6-dihydrouracil and 5,6-dihydrothymine. Has AP (apurinic/apyrimidinic) lyase activity and introduces nicks in the DNA strand. Cleaves the DNA backbone by beta-delta elimination to generate a single-strand break at the site of the removed base with both 3'- and 5'-phosphates. The protein is Endonuclease 8 of Shigella sonnei (strain Ss046).